We begin with the raw amino-acid sequence, 670 residues long: Cyclic di-GMP phosphodiesterase PdeA (670 aa).

Residues 428–670 (QNKIFQYILK…GFLWHKPEPI (243 aa)) enclose the EAL domain.

The enzyme catalyses 3',3'-c-di-GMP + H2O = 5'-phosphoguanylyl(3'-&gt;5')guanosine + H(+). In terms of biological role, phosphodiesterase (PDE) that catalyzes the hydrolysis of cyclic diguanylate (c-di-GMP) to pGpG. In Borreliella burgdorferi (strain ATCC 35210 / DSM 4680 / CIP 102532 / B31) (Borrelia burgdorferi), this protein is Cyclic di-GMP phosphodiesterase PdeA.